Here is a 209-residue protein sequence, read N- to C-terminus: Uracil phosphoribosyltransferase (209 aa).

Residues R79, R104, and 131 to 139 (DPMLATGGS) contribute to the 5-phospho-alpha-D-ribose 1-diphosphate site. Residues V194 and 199–201 (GDA) contribute to the uracil site. A 5-phospho-alpha-D-ribose 1-diphosphate-binding site is contributed by D200.

Belongs to the UPRTase family. Requires Mg(2+) as cofactor.

The catalysed reaction is UMP + diphosphate = 5-phospho-alpha-D-ribose 1-diphosphate + uracil. Its pathway is pyrimidine metabolism; UMP biosynthesis via salvage pathway; UMP from uracil: step 1/1. Its activity is regulated as follows. Allosterically activated by GTP. In terms of biological role, catalyzes the conversion of uracil and 5-phospho-alpha-D-ribose 1-diphosphate (PRPP) to UMP and diphosphate. This chain is Uracil phosphoribosyltransferase, found in Clostridium botulinum (strain ATCC 19397 / Type A).